The sequence spans 186 residues: TCHDDDNLVLPEVYDQDGNPLRIGERYIIKNPLLGAGAVYLDNIGNLQCPNAVLQHMSIPQFLGKGTPVVFIRKSESDYGDVVRLMTAVYIKFFVKTTKLCVDETVWKVNNEQLVVTGGNVGNENDIFKIKKTDLVIRGMKNVYKLLHCPSHLECKNIGSNFKNGYPRLVTVNDEKDFIPFVFIKA.

The N-terminal stretch at T1–N7 is a signal peptide. Disulfide bonds link C49-C101 and C149-C155.

Belongs to the protease inhibitor I3 (leguminous Kunitz-type inhibitor) family.

It localises to the vacuole. In terms of biological role, probable inhibitor of cysteine proteases. May protect the plant by inhibiting proteases of invading organisms. In Solanum tuberosum (Potato), this protein is Cysteine protease inhibitor 10.